The following is a 270-amino-acid chain: Centriole, cilia and spindle-associated protein (270 aa).

Met-1 carries the N-acetylmethionine modification. Residues 9-15 carry the ST]-E-Y-X(3)-Y motif 1; required for efficient microtubule binding and stabilization motif; the sequence is SEYMKRY. Disordered stretches follow at residues 50-201 and 231-255; these read DDWG…SQKT and LVAQ…SSSE. Residues 53–67 are compositionally biased toward low complexity; the sequence is GPAGSSEDSASSESS. Residues 75 to 86 show a composition bias toward pro residues; that stretch reads RCAPPSPPPPVE. A compositionally biased stretch (basic and acidic residues) spans 92-101; sequence EAERRARGAP. A compositionally biased stretch (acidic residues) spans 102–118; the sequence is EEQDAEAGDAEAEDAED. The span at 127-144 shows a compositional bias: basic and acidic residues; sequence KDVEDKPEQQTRTRETDK. Positions 145–156 are enriched in polar residues; the sequence is SPTSTEPRQQPS. An ST]-E-Y-X(3)-Y motif 2; required for efficient microtubule binding and stabilization motif is present at residues 260–266; it reads TEYMRCY.

The protein belongs to the CCSAP family. As to quaternary structure, associates with microtubules; the association occurs on polyglutamylated tubulin.

It is found in the cytoplasm. Its subcellular location is the cytoskeleton. The protein localises to the microtubule organizing center. The protein resides in the centrosome. It localises to the centriole. It is found in the spindle. Its subcellular location is the cilium basal body. The protein localises to the cilium axoneme. The protein resides in the cell projection. It localises to the axon. It is found in the cilium. In terms of biological role, plays a role in microtubule (MT) stabilization and this stabilization involves the maintenance of NUMA1 at the spindle poles. Colocalizes with polyglutamylated MTs to promote MT stabilization and regulate bipolar spindle formation in mitosis. Binding of CCSAP to centrosomes and the spindle around centrosomes during mitosis inhibits MT depolymerization, thereby stabilizing the mitotic spindle. May play a role in embryonic development. May be required for proper cilia beating. This Homo sapiens (Human) protein is Centriole, cilia and spindle-associated protein (CCSAP).